The following is a 587-amino-acid chain: Arginine--tRNA ligase (587 aa).

The 'HIGH' region motif lies at 127 to 137 (ANPTGPLHVGH).

The protein belongs to the class-I aminoacyl-tRNA synthetase family. As to quaternary structure, monomer.

The protein localises to the cytoplasm. It carries out the reaction tRNA(Arg) + L-arginine + ATP = L-arginyl-tRNA(Arg) + AMP + diphosphate. The chain is Arginine--tRNA ligase from Dechloromonas aromatica (strain RCB).